Consider the following 238-residue polypeptide: Ribonuclease PH (238 aa).

Phosphate-binding positions include Arg86 and 124–126; that span reads GTR.

This sequence belongs to the RNase PH family. Homohexameric ring arranged as a trimer of dimers.

The catalysed reaction is tRNA(n+1) + phosphate = tRNA(n) + a ribonucleoside 5'-diphosphate. Its function is as follows. Phosphorolytic 3'-5' exoribonuclease that plays an important role in tRNA 3'-end maturation. Removes nucleotide residues following the 3'-CCA terminus of tRNAs; can also add nucleotides to the ends of RNA molecules by using nucleoside diphosphates as substrates, but this may not be physiologically important. Probably plays a role in initiation of 16S rRNA degradation (leading to ribosome degradation) during starvation. This is Ribonuclease PH from Geotalea daltonii (strain DSM 22248 / JCM 15807 / FRC-32) (Geobacter daltonii).